Here is a 335-residue protein sequence, read N- to C-terminus: DNA-directed RNA polymerases I and III subunit RPAC1 (335 aa).

S2 bears the N-acetylserine mark. Position 17 is a phosphoserine (S17).

It belongs to the archaeal Rpo3/eukaryotic RPB3 RNA polymerase subunit family. As to quaternary structure, component of the RNA polymerase I (Pol I) complex consisting of 14 subunits: RPA135, RPA190, RPC40, RPA14, RPB5, RPO26, RPA43, RPB8, RPA12, RPB10, RPC19, RPC10, RPA49 and RPA34. The complex is composed of a horseshoe-shaped core containing ten subunits (RPA135, RPA190, RPB5, RPO26, RPB8, RPB10, RPC10, RPA12, RPC19 and RPC40) where RPA135 and RPA190 form the DNA-binding cleft. Outside of the core, RPA14 and RPA43 form the stalk that mediates interactions with transcription initiation factors and newly synthesized RNA. Component of the RNA polymerase III (Pol III) complex consisting of at least 17 subunits. Interacts with the RPC19/RPAC2 and RPC53/RPC4. Interacts with retrotransposons Ty integrase, targeting Ty1, Ty2 and Ty4 integration upstream of pol III-transcribed genes.

Its subcellular location is the nucleus. It localises to the nucleolus. DNA-dependent RNA polymerases catalyze the transcription of DNA into RNA using the four ribonucleoside triphosphates as substrates. Common component of RNA polymerases I (Pol I) and III (Pol III) which synthesize ribosomal RNA precursors and small RNAs, such as 5S rRNA and tRNAs, respectively. RPC40 is part of the polymerase core and may function as a clamp element that moves to open and close the cleft. Plays an important role in targeting retrotransposons Ty integration upstream of pol III-transcribed genes such as tRNA genes, allowing Ty1, Ty2 and Ty4 to proliferate and yet minimizing genetic damage. The chain is DNA-directed RNA polymerases I and III subunit RPAC1 from Saccharomyces cerevisiae (strain ATCC 204508 / S288c) (Baker's yeast).